The primary structure comprises 146 residues: Transcriptional regulator MraZ (146 aa).

SpoVT-AbrB domains are found at residues 7–54 and 83–126; these read HVTN…GPEL and GVYV…DPQA.

It belongs to the MraZ family. In terms of assembly, forms oligomers.

Its subcellular location is the cytoplasm. It localises to the nucleoid. This is Transcriptional regulator MraZ from Rhizobium meliloti (strain 1021) (Ensifer meliloti).